We begin with the raw amino-acid sequence, 322 residues long: Sideroflexin fsf1 (322 aa).

Helical transmembrane passes span S143–P163, V175–L195, T229–M249, and L269–A289.

Belongs to the sideroflexin family.

The protein localises to the mitochondrion membrane. Mitochondrial amino-acid transporter that mediates transport of serine into mitochondria. The protein is Sideroflexin fsf1 of Schizosaccharomyces pombe (strain 972 / ATCC 24843) (Fission yeast).